The chain runs to 368 residues: Protein Wnt-1 (368 aa).

The N-terminal stretch at 1–25 (MRGPALLLALRALCALSALRGTARA) is a signal peptide. 11 cysteine pairs are disulfide-bonded: C91–C102, C141–C149, C151–C168, C216–C230, C218–C225, C297–C328, C313–C323, C327–C367, C343–C358, C345–C355, and C350–C351. S222 is lipidated: O-palmitoleoyl serine; by PORCN.

This sequence belongs to the Wnt family. In terms of assembly, forms a soluble 1:1 complex with AFM; this prevents oligomerization and is required for prolonged biological activity. The complex with AFM may represent the physiological form in body fluids. Interacts with PORCN. In terms of processing, N-glycosylated. N-glycosylation favors subsequent palmitoleoylation. Palmitoleoylation is required for efficient binding to frizzled receptors. Palmitoleoylation is necessary for proper trafficking to cell surface. Depalmitoleoylated by NOTUM, leading to inhibit Wnt signaling pathway.

It localises to the secreted. Its subcellular location is the extracellular space. The protein localises to the extracellular matrix. Functionally, ligand for members of the frizzled family of seven transmembrane receptors. Acts in the canonical Wnt signaling pathway by promoting beta-catenin-dependent transcriptional activation. Developmental protein that promotes cell proliferation in the developing spinal cord. Has a role in osteoblast function, bone development and bone homeostasis. The protein is Protein Wnt-1 (WNT1) of Gallus gallus (Chicken).